The chain runs to 249 residues: Carbohydrate deacetylase (249 aa).

The Mg(2+) site is built by His60 and His125.

Belongs to the YdjC deacetylase family. Homodimer. Mg(2+) serves as cofactor.

Probably catalyzes the deacetylation of acetylated carbohydrates an important step in the degradation of oligosaccharides. In Thermoanaerobacter pseudethanolicus (strain ATCC 33223 / 39E) (Clostridium thermohydrosulfuricum), this protein is Carbohydrate deacetylase.